A 264-amino-acid chain; its full sequence is Myozenin-2 (264 aa).

At R53 the chain carries Omega-N-methylarginine. The disordered stretch occupies residues 98 to 134; sequence ESGSQQAPFTPPNTPDPRSPPNPENIAPGYSGPLKEI. S101 bears the Phosphoserine mark. Pro residues predominate over residues 106–120; sequence FTPPNTPDPRSPPNP. T107 and T111 each carry phosphothreonine. S116 is subject to Phosphoserine.

Belongs to the myozenin family. As to quaternary structure, interacts via its C-terminus with spectrin repeats 3 and 4 of ACTN2. Interacts with ACTN1, LDB3, MYOT and PPP3CA.

The protein localises to the cytoplasm. It localises to the myofibril. Its subcellular location is the sarcomere. The protein resides in the z line. Functionally, myozenins may serve as intracellular binding proteins involved in linking Z line proteins such as alpha-actinin, gamma-filamin, TCAP/telethonin, LDB3/ZASP and localizing calcineurin signaling to the sarcomere. Plays an important role in the modulation of calcineurin signaling. May play a role in myofibrillogenesis. This chain is Myozenin-2 (MYOZ2), found in Bos taurus (Bovine).